Here is a 195-residue protein sequence, read N- to C-terminus: Myelin-associated neurite-outgrowth inhibitor (195 aa).

N-acetylmethionine is present on Met1. Topologically, residues Met1–Lys18 are cytoplasmic. Ser6 bears the Phosphoserine mark. Residues Gly19 to Tyr42 form a helical membrane-spanning segment. Residues Pro43–Asn142 lie on the Extracellular side of the membrane. The N-linked (GlcNAc...) asparagine glycan is linked to Asn46. Residues Gly143–Ala164 traverse the membrane as a helical segment. The Cytoplasmic segment spans residues His165–Trp195.

The protein belongs to the FAM168 family. As to quaternary structure, may form homodimers. May interact with DAZAP2, FAM168A, PRDX6, RBM6, TMTC1 and YPEL2. Interacts with CDC27. Post-translationally, N-glycosylated. Expressed in the brain, within neuronal axonal fibers and associated with myelin sheets (at protein level). Expression tends to be lower in the brain of Alzheimer disease patients compared to healthy individuals (at protein level).

Its subcellular location is the cytoplasm. The protein localises to the perinuclear region. It localises to the cell membrane. The protein resides in the cell projection. It is found in the axon. Functionally, inhibitor of neuronal axonal outgrowth. Acts as a negative regulator of CDC42 and STAT3 and a positive regulator of STMN2. Positive regulator of CDC27. This is Myelin-associated neurite-outgrowth inhibitor (FAM168B) from Homo sapiens (Human).